We begin with the raw amino-acid sequence, 352 residues long: Protein RecA (352 aa).

66–73 (GPESSGKT) serves as a coordination point for ATP. The segment at 330 to 352 (TKDDSKVATVDKANEEQAAEPVQ) is disordered.

Belongs to the RecA family.

Its subcellular location is the cytoplasm. Can catalyze the hydrolysis of ATP in the presence of single-stranded DNA, the ATP-dependent uptake of single-stranded DNA by duplex DNA, and the ATP-dependent hybridization of homologous single-stranded DNAs. It interacts with LexA causing its activation and leading to its autocatalytic cleavage. The sequence is that of Protein RecA from Psychrobacter cryohalolentis (strain ATCC BAA-1226 / DSM 17306 / VKM B-2378 / K5).